The primary structure comprises 314 residues: Ferrochelatase (314 aa).

Positions 184 and 259 each coordinate Fe cation.

The protein belongs to the ferrochelatase family.

It localises to the cytoplasm. The catalysed reaction is heme b + 2 H(+) = protoporphyrin IX + Fe(2+). The protein operates within porphyrin-containing compound metabolism; protoheme biosynthesis; protoheme from protoporphyrin-IX: step 1/1. Its function is as follows. Catalyzes the ferrous insertion into protoporphyrin IX. The protein is Ferrochelatase of Chlamydia trachomatis serovar L2 (strain ATCC VR-902B / DSM 19102 / 434/Bu).